Consider the following 148-residue polypeptide: Ribonuclease pancreatic (148 aa).

Positions 1-25 (MGLEKSLLLLPLLVLVLGCVQPSLG) are cleaved as a signal peptide. Substrate-binding residues include K32 and R35. Residue H37 is the Proton acceptor of the active site. 4 disulfides stabilise this stretch: C50/C108, C64/C119, C82/C134, and C89/C96. Substrate is bound by residues 65 to 69 (KPVNT) and K90. The active-site Proton donor is the H143.

The protein belongs to the pancreatic ribonuclease family. Monomer. Interacts with and forms tight 1:1 complexes with RNH1. Dimerization of two such complexes may occur. Interaction with RNH1 inhibits this protein. In terms of tissue distribution, pancreas.

Its subcellular location is the secreted. The catalysed reaction is an [RNA] containing cytidine + H2O = an [RNA]-3'-cytidine-3'-phosphate + a 5'-hydroxy-ribonucleotide-3'-[RNA].. It catalyses the reaction an [RNA] containing uridine + H2O = an [RNA]-3'-uridine-3'-phosphate + a 5'-hydroxy-ribonucleotide-3'-[RNA].. In terms of biological role, endonuclease that catalyzes the cleavage of RNA on the 3' side of pyrimidine nucleotides. Acts on single-stranded and double-stranded RNA. The protein is Ribonuclease pancreatic (RNASE1) of Gerbillus nigeriae (Nigerian gerbil).